We begin with the raw amino-acid sequence, 118 residues long: Large ribosomal subunit protein bL20 (118 aa).

The protein belongs to the bacterial ribosomal protein bL20 family.

Functionally, binds directly to 23S ribosomal RNA and is necessary for the in vitro assembly process of the 50S ribosomal subunit. It is not involved in the protein synthesizing functions of that subunit. The protein is Large ribosomal subunit protein bL20 of Ralstonia pickettii (strain 12J).